A 256-amino-acid polypeptide reads, in one-letter code: uncharacterized protein (256 aa).

ATP is bound at residue 29 to 36 (GDDHSGKT).

This is an uncharacterized protein from Saccharomyces cerevisiae (strain ATCC 204508 / S288c) (Baker's yeast).